A 163-amino-acid chain; its full sequence is MPSFDIVSEVDLQEARNAVDNATREVESRFDFRGVEATFELNDANKTIKVLSESDFQVNQLLDILRAKLLKRGIEGSSLDVPEAFVHSGKTWFVEAKLKQGIESAVQKKIVKLIKDSKLKVQAQIQGEEIRVTGKSRDDLQSVMALVRGGDLGQPFQFKNFRD.

The protein belongs to the YajQ family.

Nucleotide-binding protein. The chain is Nucleotide-binding protein CKO_02735 from Citrobacter koseri (strain ATCC BAA-895 / CDC 4225-83 / SGSC4696).